The sequence spans 245 residues: Acyl-protein thioesterase 1 (245 aa).

Active-site charge relay system residues include serine 126, aspartate 182, and histidine 214.

The protein belongs to the AB hydrolase superfamily. AB hydrolase 2 family.

It localises to the cytoplasm. It is found in the nucleus. The enzyme catalyses S-hexadecanoyl-L-cysteinyl-[protein] + H2O = L-cysteinyl-[protein] + hexadecanoate + H(+). Its function is as follows. Hydrolyzes fatty acids from S-acylated cysteine residues in proteins with a strong preference for palmitoylated G-alpha proteins over other acyl substrates. Mediates the deacylation of G-alpha proteins such as GPA1 in vivo, but has weak or no activity toward palmitoylated Ras proteins. Has weak lysophospholipase activity in vitro; however such activity may not exist in vivo. This is Acyl-protein thioesterase 1 from Neurospora crassa (strain ATCC 24698 / 74-OR23-1A / CBS 708.71 / DSM 1257 / FGSC 987).